A 261-amino-acid chain; its full sequence is Glucose 1-dehydrogenase 3 (261 aa).

NAD(+) is bound at residue 11-35 (VITGGSTGLGRAMAVRFGQEEAKVV). Position 145 (Ser145) interacts with substrate. The Proton acceptor role is filled by Tyr158.

The protein belongs to the short-chain dehydrogenases/reductases (SDR) family. Homotetramer.

It carries out the reaction D-glucose + NAD(+) = D-glucono-1,5-lactone + NADH + H(+). It catalyses the reaction D-glucose + NADP(+) = D-glucono-1,5-lactone + NADPH + H(+). The sequence is that of Glucose 1-dehydrogenase 3 (gdhIII) from Priestia megaterium (Bacillus megaterium).